The sequence spans 405 residues: Phosphopentomutase (405 aa).

Positions 10, 303, 308, 344, 345, and 356 each coordinate Mn(2+).

It belongs to the phosphopentomutase family. Mn(2+) is required as a cofactor.

Its subcellular location is the cytoplasm. The catalysed reaction is 2-deoxy-alpha-D-ribose 1-phosphate = 2-deoxy-D-ribose 5-phosphate. The enzyme catalyses alpha-D-ribose 1-phosphate = D-ribose 5-phosphate. It participates in carbohydrate degradation; 2-deoxy-D-ribose 1-phosphate degradation; D-glyceraldehyde 3-phosphate and acetaldehyde from 2-deoxy-alpha-D-ribose 1-phosphate: step 1/2. Its function is as follows. Isomerase that catalyzes the conversion of deoxy-ribose 1-phosphate (dRib-1-P) and ribose 1-phosphate (Rib-1-P) to deoxy-ribose 5-phosphate (dRib-5-P) and ribose 5-phosphate (Rib-5-P), respectively. This is Phosphopentomutase from Shewanella denitrificans (strain OS217 / ATCC BAA-1090 / DSM 15013).